Here is a 218-residue protein sequence, read N- to C-terminus: LexA repressor (218 aa).

Positions 31–51 form a DNA-binding region, H-T-H motif; it reads IREIQDGLRISSTSVVAYNLR. Active-site for autocatalytic cleavage activity residues include Ser-137 and Lys-176.

It belongs to the peptidase S24 family. As to quaternary structure, homodimer.

It carries out the reaction Hydrolysis of Ala-|-Gly bond in repressor LexA.. In terms of biological role, represses a number of genes involved in the response to DNA damage (SOS response), including recA and lexA. In the presence of single-stranded DNA, RecA interacts with LexA causing an autocatalytic cleavage which disrupts the DNA-binding part of LexA, leading to derepression of the SOS regulon and eventually DNA repair. This chain is LexA repressor, found in Roseiflexus sp. (strain RS-1).